The sequence spans 765 residues: Probable dipeptidyl peptidase 4 (765 aa).

Residues M1 to A14 form the signal peptide. N-linked (GlcNAc...) asparagine glycosylation is found at N35, N78, N101, N110, N169, N218, N465, and N490. The active-site Charge relay system is S613. The N-linked (GlcNAc...) asparagine glycan is linked to N665. Catalysis depends on charge relay system residues D690 and H725.

The protein belongs to the peptidase S9B family.

Its subcellular location is the secreted. The catalysed reaction is Release of an N-terminal dipeptide, Xaa-Yaa-|-Zaa-, from a polypeptide, preferentially when Yaa is Pro, provided Zaa is neither Pro nor hydroxyproline.. In terms of biological role, extracellular dipeptidyl-peptidase which removes N-terminal dipeptides sequentially from polypeptides having unsubstituted N-termini provided that the penultimate residue is proline. Contributes to pathogenicity. The polypeptide is Probable dipeptidyl peptidase 4 (dpp4) (Aspergillus fumigatus (strain ATCC MYA-4609 / CBS 101355 / FGSC A1100 / Af293) (Neosartorya fumigata)).